Reading from the N-terminus, the 423-residue chain is Aspartic protease-like protein pytH (423 aa).

The signal sequence occupies residues 1 to 16; sequence MWLSVALLTLLDGALA. The region spanning 38–416 is the Peptidase A1 domain; that stretch reads TTDAIQIGTP…DFDKLRVGLA (379 aa). The active site involves Asp56. Asn88, Asn97, Asn168, Asn196, Asn231, and Asn279 each carry an N-linked (GlcNAc...) asparagine glycan. The active site involves Asp291. A glycan (N-linked (GlcNAc...) asparagine) is linked at Asn330. Residues Cys338 and Cys377 are joined by a disulfide bond.

Belongs to the peptidase A1 family.

It participates in secondary metabolite biosynthesis. In terms of biological role, aspartic protease-like protein; part of the gene cluster that mediates the biosynthesis of pyranterreones, a family of antioxidative compounds. The first step of pyranonigrins biosynthesis is performed by the hybrid PKS-NRPS synthetase pytA that condenses 4 malonyl-CoA units ato the acetyl starter unit by the modular PKS of pytA. The acyl chain is then connected to an L-serine through the amide bond by the modular NRPS of pytA. A tetramic acid is formed and released from the PKS-NRPS pytA to give pyranterreone 5 with the help of the thioesterase pytI. Pyranterreone 5 could be methylated by pytC to afford pyranterreone 6. Both pyranterreones 5 and 6 are subsequently oxidized by the FAD-linked oxidoreductase pytB and the cytochrome P450 monooxygenase pytD to form the fused gamma-pyrone core, resulting in pyranterreones 7 and 11, respectively. The hydroxy group at C-8 of pyranterreones 7 and 11 are dehydrated by the aspartyl protease pytH to form a delta-7 double bond to give pyranterreones 3 and 1, 2 accordingly. The exo-methylene of pyranterreone 3 could be reduced into a pendant methyl by reductase pytE to provide pyranterreone 4, also known as cordylactam. Pyranterreone 4 can be reconverted to pyranterreone 3 through pytB-catalyzed dehydrogenation or further oxidized to pyranterreones 9 and 10. In Aspergillus terreus (strain NIH 2624 / FGSC A1156), this protein is Aspartic protease-like protein pytH.